The chain runs to 167 residues: Large ribosomal subunit protein uL10 (167 aa).

The protein belongs to the universal ribosomal protein uL10 family. In terms of assembly, part of the ribosomal stalk of the 50S ribosomal subunit. The N-terminus interacts with L11 and the large rRNA to form the base of the stalk. The C-terminus forms an elongated spine to which L12 dimers bind in a sequential fashion forming a multimeric L10(L12)X complex.

In terms of biological role, forms part of the ribosomal stalk, playing a central role in the interaction of the ribosome with GTP-bound translation factors. This chain is Large ribosomal subunit protein uL10, found in Lactiplantibacillus plantarum (strain ATCC BAA-793 / NCIMB 8826 / WCFS1) (Lactobacillus plantarum).